Reading from the N-terminus, the 374-residue chain is Cobalt-precorrin-5B C(1)-methyltransferase (374 aa).

The protein belongs to the CbiD family.

It catalyses the reaction Co-precorrin-5B + S-adenosyl-L-methionine = Co-precorrin-6A + S-adenosyl-L-homocysteine. It participates in cofactor biosynthesis; adenosylcobalamin biosynthesis; cob(II)yrinate a,c-diamide from sirohydrochlorin (anaerobic route): step 6/10. In terms of biological role, catalyzes the methylation of C-1 in cobalt-precorrin-5B to form cobalt-precorrin-6A. The sequence is that of Cobalt-precorrin-5B C(1)-methyltransferase from Synechococcus elongatus (strain ATCC 33912 / PCC 7942 / FACHB-805) (Anacystis nidulans R2).